The sequence spans 86 residues: MAQGQSLQDIFLNVLRRERIQVSIYLFNGIKLQGHIESFDQFVIVLKNTISQMVYKHAVSTIVPSKFVSHYANNSSNYSNHSGDRN.

In terms of domain architecture, Sm spans 9 to 68 (DIFLNVLRRERIQVSIYLFNGIKLQGHIESFDQFVIVLKNTISQMVYKHAVSTIVPSKFV).

This sequence belongs to the Hfq family. Homohexamer.

Its function is as follows. RNA chaperone that binds small regulatory RNA (sRNAs) and mRNAs to facilitate mRNA translational regulation in response to envelope stress, environmental stress and changes in metabolite concentrations. Also binds with high specificity to tRNAs. This Baumannia cicadellinicola subsp. Homalodisca coagulata protein is RNA-binding protein Hfq.